We begin with the raw amino-acid sequence, 112 residues long: Cytoplasmic envelopment protein 3 (112 aa).

Gly-2 is lipidated: N-myristoyl glycine; by host. The interval 84–112 (GANKGGGKRTSSLKSAKNGAGVKKKVRAL) is disordered.

It belongs to the herpesviridae cytoplasmic envelopment protein 3 family. As to quaternary structure, interacts with cytoplasmic envelopment protein 2; this interaction is essential for the proper localization of each protein to the assembly complex and thus for the production of infectious virus. Post-translationally, myristoylation and palmitoylation (probably on one or more of the nearby cysteines at the N-terminus) enable membrane-binding and Golgi apparatus-specific targeting and are essential for efficient packaging. In terms of processing, phosphorylated. Phosphorylation does not seem to be required for recycling to the host Golgi apparatus. Packaging is selective for underphosphorylated forms.

It localises to the virion tegument. The protein resides in the virion membrane. It is found in the host cell membrane. Its subcellular location is the host Golgi apparatus membrane. In terms of biological role, plays an important role in the cytoplasmic envelopment of tegument proteins and capsids during the assembly and egress processes. Also participates in viral entry at the fusion step probably by regulating the core fusion machinery. The protein is Cytoplasmic envelopment protein 3 (UL99) of Murid herpesvirus 1 (strain K181) (MuHV-1).